We begin with the raw amino-acid sequence, 396 residues long: Schizokinen exporter SchE (396 aa).

The first 25 residues, 1 to 25 (MLPKLILLATLYISQFIPTTFFIQA), serve as a signal peptide directing secretion. At 26-39 (LPVFMRQQKMSLDV) the chain is on the cytoplasmic side. Residues 40–60 (IGFLGLLILPSGLKFLWSPFI) form a helical membrane-spanning segment. Residues 61–73 (DRYRLGKLGHYRG) lie on the Periplasmic side of the membrane. The helical transmembrane segment at 74-94 (WIICFQLLLISTMLVTAFIDI) threads the bilayer. Residues 95–104 (QDNLNAFLTC) are Cytoplasmic-facing. Residues 105-127 (MFLASLFSSSQDIATDALAVNLL) traverse the membrane as a helical segment. The Periplasmic segment spans residues 128–137 (EPQERGLGNA). Residues 138–158 (IQSGGNIFGAIIGGGVMLILL) form a helical membrane-spanning segment. Topologically, residues 159–162 (DKIG) are cytoplasmic. The helical transmembrane segment at 163–183 (WRYSLITLSIFMLINLVPILI) threads the bilayer. Over 184–214 (YREKSQHQLENSTFFRSYFQPFISFLSRPKA) the chain is Periplasmic. The helical transmembrane segment at 215-235 (LPWLFVVLLYMMGDSVTSLMI) threads the bilayer. Residues 236-251 (RPLLVDRGLSLPDIGW) lie on the Cytoplasmic side of the membrane. Residues 252–272 (ILGIVSYSARIVSALIAGLVI) form a helical membrane-spanning segment. Residues 273–281 (VKLGRIKSL) are Periplasmic-facing. The chain crosses the membrane as a helical span at residues 282 to 302 (IIFGFIADLTTLLYIIPAIGV). Over 303–304 (SS) the chain is Cytoplasmic. Residues 305 to 325 (LLVLYTVCIIVNATQSMAYTA) form a helical membrane-spanning segment. Over 326-346 (LLSAMMDKCEKNTAATDYTMQ) the chain is Periplasmic. 2 helical membrane passes run 347-367 (VSVM…LATT) and 368-388 (MGYS…VFLI). Residues 389-396 (TQEYGVSS) lie on the Periplasmic side of the membrane.

This sequence belongs to the major facilitator superfamily.

The protein localises to the cell inner membrane. Involved in the TolC-like protein HgdD-dependent secretion of schizokinen, a dihydroxamate-type siderophore. Transports schizokinen from the cytoplasm to the periplasm. The sequence is that of Schizokinen exporter SchE from Nostoc sp. (strain PCC 7120 / SAG 25.82 / UTEX 2576).